The chain runs to 240 residues: ATP-dependent dethiobiotin synthetase BioD (240 aa).

15–20 (EIGKTF) is a binding site for ATP. Thr-19 contributes to the Mg(2+) binding site. Residue Lys-40 is part of the active site. ATP is bound by residues Asp-57, 118–121 (EGVG), and 178–179 (NR). Mg(2+) contacts are provided by Asp-57 and Glu-118.

It belongs to the dethiobiotin synthetase family. In terms of assembly, homodimer. Requires Mg(2+) as cofactor.

The protein resides in the cytoplasm. It catalyses the reaction (7R,8S)-7,8-diammoniononanoate + CO2 + ATP = (4R,5S)-dethiobiotin + ADP + phosphate + 3 H(+). The protein operates within cofactor biosynthesis; biotin biosynthesis; biotin from 7,8-diaminononanoate: step 1/2. Functionally, catalyzes a mechanistically unusual reaction, the ATP-dependent insertion of CO2 between the N7 and N8 nitrogen atoms of 7,8-diaminopelargonic acid (DAPA, also called 7,8-diammoniononanoate) to form a ureido ring. The chain is ATP-dependent dethiobiotin synthetase BioD from Burkholderia mallei (strain NCTC 10247).